The primary structure comprises 95 residues: Large ribosomal subunit protein bL27 (95 aa).

Positions 1–8 (MEMNLQFF) are excised as a propeptide. Residues 1-34 (MEMNLQFFSHHKGGGSTSNGRDSAGRRLGTKRAD) are disordered.

This sequence belongs to the bacterial ribosomal protein bL27 family. The N-terminus is cleaved by ribosomal processing cysteine protease Prp.

The polypeptide is Large ribosomal subunit protein bL27 (Pediococcus pentosaceus (strain ATCC 25745 / CCUG 21536 / LMG 10740 / 183-1w)).